Reading from the N-terminus, the 445-residue chain is Glutamate-1-semialdehyde 2,1-aminomutase (445 aa).

Position 281 is an N6-(pyridoxal phosphate)lysine (K281).

This sequence belongs to the class-III pyridoxal-phosphate-dependent aminotransferase family. HemL subfamily. As to quaternary structure, homodimer. Pyridoxal 5'-phosphate serves as cofactor.

Its subcellular location is the cytoplasm. The enzyme catalyses (S)-4-amino-5-oxopentanoate = 5-aminolevulinate. The protein operates within porphyrin-containing compound metabolism; protoporphyrin-IX biosynthesis; 5-aminolevulinate from L-glutamyl-tRNA(Glu): step 2/2. This is Glutamate-1-semialdehyde 2,1-aminomutase from Nocardioides sp. (strain ATCC BAA-499 / JS614).